We begin with the raw amino-acid sequence, 309 residues long: Protease HtpX homolog (309 aa).

Transmembrane regions (helical) follow at residues 15-35 (NAVLTTYCVIFAFIGLLVDVI) and 54-74 (IFPTITVIMFLVAFVVIVVCI). Residue His-165 coordinates Zn(2+). The active site involves Glu-166. Residue His-169 coordinates Zn(2+). Helical transmembrane passes span 181–201 (VGILSNIMLLVANFSVYFFMG) and 213–233 (MILLVLQIVLPFLTLILQMYL). Glu-238 contributes to the Zn(2+) binding site.

Belongs to the peptidase M48B family. Zn(2+) is required as a cofactor.

It localises to the cell inner membrane. This Helicobacter acinonychis (strain Sheeba) protein is Protease HtpX homolog.